A 515-amino-acid polypeptide reads, in one-letter code: uncharacterized protein (515 aa).

Belongs to the AllF family.

This is an uncharacterized protein from Escherichia coli (strain K12).